Consider the following 632-residue polypeptide: MAU2 chromatid cohesion factor homolog (632 aa).

TPR repeat units follow at residues 453-486 (GGFY…ANAE) and 493-526 (SCSL…ASKI).

It belongs to the SCC4/mau-2 family. In terms of assembly, interacts with Nipped-B to form the cohesin loading complex.

It localises to the nucleus. The protein resides in the nucleoplasm. In terms of biological role, required for association of the cohesin complex with chromatin during interphase. Plays a role in sister chromatid cohesion and normal progression through prometaphase. The sequence is that of MAU2 chromatid cohesion factor homolog from Drosophila simulans (Fruit fly).